The primary structure comprises 338 residues: MRDKLVAMLELGRKAFESADSAVELQEIRVRFLGKKGELTAIMKGMGQLTPEQRPVVGALANQVKSELEELFEERSRIVGQQEMDKRLKQERVDVTLPGRRNSCGTKHPVTLVIEEITDIFSALGFSVAEGPEIEQDFYNFEALNMPKDHPARDMQDTFYINEDVVLRTHTSPVQIRTMLKHAPPVRVIAPGTVYRRDSDITHTPMFHQVEGFLVDRNITFGDLKGILTSFLSQIFGKGLNVRFRPSFFPFTEPSAEVDIQCVMCKGKGCRVCKNSGWLEILGSGMIDPEVFKSVDYDSETYSGFAFGMGVERIAMLKYGVNDLRLFFENDVRFLRQF.

A Mg(2+)-binding site is contributed by glutamate 253.

It belongs to the class-II aminoacyl-tRNA synthetase family. Phe-tRNA synthetase alpha subunit type 1 subfamily. As to quaternary structure, tetramer of two alpha and two beta subunits. Mg(2+) serves as cofactor.

The protein resides in the cytoplasm. It catalyses the reaction tRNA(Phe) + L-phenylalanine + ATP = L-phenylalanyl-tRNA(Phe) + AMP + diphosphate + H(+). This chain is Phenylalanine--tRNA ligase alpha subunit, found in Syntrophotalea carbinolica (strain DSM 2380 / NBRC 103641 / GraBd1) (Pelobacter carbinolicus).